We begin with the raw amino-acid sequence, 563 residues long: Arginine--tRNA ligase (563 aa).

A 'HIGH' region motif is present at residues 121–131 (PNIAKPFSIGH).

The protein belongs to the class-I aminoacyl-tRNA synthetase family. In terms of assembly, monomer.

It is found in the cytoplasm. The enzyme catalyses tRNA(Arg) + L-arginine + ATP = L-arginyl-tRNA(Arg) + AMP + diphosphate. This is Arginine--tRNA ligase from Streptococcus pneumoniae serotype 19F (strain G54).